The chain runs to 285 residues: Eukaryotic translation initiation factor 3 subunit F-2 (285 aa).

The MPN domain maps to 11–145 (VFLKPLVLFQ…TRLYCAVEMG (135 aa)).

The protein belongs to the eIF-3 subunit F family. Component of the eukaryotic translation initiation factor 3 (eIF-3) complex. The eIF-3 complex interacts with pix.

The protein resides in the cytoplasm. Component of the eukaryotic translation initiation factor 3 (eIF-3) complex, which is involved in protein synthesis of a specialized repertoire of mRNAs and, together with other initiation factors, stimulates binding of mRNA and methionyl-tRNAi to the 40S ribosome. The eIF-3 complex specifically targets and initiates translation of a subset of mRNAs involved in cell proliferation. The protein is Eukaryotic translation initiation factor 3 subunit F-2 of Drosophila sechellia (Fruit fly).